The primary structure comprises 88 residues: Small ribosomal subunit protein bS16 (88 aa).

Belongs to the bacterial ribosomal protein bS16 family.

The protein is Small ribosomal subunit protein bS16 of Buchnera aphidicola subsp. Cinara cedri (strain Cc).